The sequence spans 89 residues: Small ribosomal subunit protein uS14A (89 aa).

This sequence belongs to the universal ribosomal protein uS14 family. As to quaternary structure, part of the 30S ribosomal subunit. Contacts proteins S3 and S10.

Binds 16S rRNA, required for the assembly of 30S particles and may also be responsible for determining the conformation of the 16S rRNA at the A site. The polypeptide is Small ribosomal subunit protein uS14A (Staphylococcus epidermidis (strain ATCC 35984 / DSM 28319 / BCRC 17069 / CCUG 31568 / BM 3577 / RP62A)).